Reading from the N-terminus, the 561-residue chain is Carboxylesterase 1E (561 aa).

The first 18 residues, 1–18 (MCLYALILVFLAAFTAGG), serve as a signal peptide directing secretion. N-linked (GlcNAc...) asparagine glycosylation is found at Asn79 and Asn107. An intrachain disulfide couples Cys87 to Cys116. Ser221 acts as the Acyl-ester intermediate in catalysis. A disulfide bond links Cys273 and Cys284. Residues Glu353 and His466 each act as charge relay system in the active site. Asn489 carries N-linked (GlcNAc...) asparagine glycosylation. A Prevents secretion from ER motif is present at residues 558–561 (HTEL).

Belongs to the type-B carboxylesterase/lipase family. In terms of tissue distribution, expressed in liver.

Its subcellular location is the endoplasmic reticulum lumen. The protein localises to the microsome membrane. The catalysed reaction is a carboxylic ester + H2O = an alcohol + a carboxylate + H(+). The enzyme catalyses all-trans-retinyl hexadecanoate + H2O = all-trans-retinol + hexadecanoate + H(+). Involved in the detoxification of xenobiotics and in the activation of ester and amide prodrugs. Hydrolyzes retinyl esters. In Rattus norvegicus (Rat), this protein is Carboxylesterase 1E (Ces1e).